The following is a 223-amino-acid chain: PKHD-type hydroxylase CPS_3426 (223 aa).

One can recognise a Fe2OG dioxygenase domain in the interval 77-175 (KSMMPFIISE…RKVALTWIES (99 aa)). Histidine 96, aspartate 98, and histidine 156 together coordinate Fe cation. Arginine 166 is a 2-oxoglutarate binding site.

It depends on Fe(2+) as a cofactor. L-ascorbate is required as a cofactor.

The chain is PKHD-type hydroxylase CPS_3426 from Colwellia psychrerythraea (strain 34H / ATCC BAA-681) (Vibrio psychroerythus).